The chain runs to 413 residues: Inactive serine protease 35 (413 aa).

The N-terminal stretch at 1-16 is a signal peptide; sequence MENMLLWLIFFTPGWT. Residue asparagine 90 is glycosylated (N-linked (GlcNAc...) asparagine). The Peptidase S1 domain maps to 124–408; it reads VYGTDSRFSI…ICLWIHGNDA (285 aa). Cysteine 154 and cysteine 170 form a disulfide bridge. Over residues 191 to 207 the composition is skewed to basic residues; it reads MRNKSGGKKRRGSKRSR. The disordered stretch occupies residues 191 to 250; sequence MRNKSGGKKRRGSKRSRREASGGDQREGTREHLRERAKGGRRRKKSGRGQRIAEGRPSFQ. The span at 208-228 shows a compositional bias: basic and acidic residues; that stretch reads REASGGDQREGTREHLRERAK. A compositionally biased stretch (basic residues) spans 229–238; sequence GGRRRKKSGR.

It belongs to the peptidase S1 family.

The protein resides in the secreted. This Homo sapiens (Human) protein is Inactive serine protease 35 (PRSS35).